Consider the following 288-residue polypeptide: MTWRSRREALRAILSGSRCARPASVFDPISMRIAEDLGFEVGMFGGSVASLAILGDPDIALITLTELAEQVRRMSRAAALPILVDADHGYGNALNVRRTVQELEGAGAAGLTIEDTALPQPFGEATPQLIAIEEGFGKIKAALDARGDPTLVIVGRTGALAITSLEDAIERAQAYEAAGVDALFFTAVKTRAQLEAIAAATTLPIVLGGPSEEISDWDYLAAQRVRIAVQGHAPIAAATQAVFDTLKAAAAGTPPMQLQGLASSELMDWVTRAALVKQRGANFLGLKK.

Ser47 contributes to the substrate binding site. Position 85 (Asp85) interacts with Mg(2+). Substrate is bound by residues Arg156 and His232.

It belongs to the isocitrate lyase/PEP mutase superfamily. Oxaloacetate decarboxylase family. In terms of assembly, homotetramer; dimer of dimers. Requires Mg(2+) as cofactor.

The catalysed reaction is oxaloacetate + H(+) = pyruvate + CO2. Catalyzes the decarboxylation of oxaloacetate into pyruvate. Seems to play a role in maintaining cellular concentrations of bicarbonate and pyruvate. In Rhodopseudomonas palustris (strain BisB18), this protein is Oxaloacetate decarboxylase.